Reading from the N-terminus, the 424-residue chain is Calreticulin (424 aa).

The first 29 residues, 1–29 (MAIRARSSSYAAAAVALALALASVAAVAG), serve as a signal peptide directing secretion. The N-linked (GlcNAc...) asparagine glycan is linked to N61. A disulfide bond links C115 and C147. The an alpha-D-glucoside site is built by Y119, K121, Y138, and D145. Tandem repeats lie at residues 201–212 (KQSGSIYEHWDI), 220–231 (DPEAKKPEDWDD), 237–248 (DPEDKKPEGYDD), 255–266 (DPDAKKPEDWDD), 270–280 (GEWTAPTIPNP), 284–294 (GPWKQKKIKNP), and 298–308 (GKWKAPMIDNP). Positions 201-266 (KQSGSIYEHW…DAKKPEDWDD (66 aa)) are 4 X approximate repeats. A compositionally biased stretch (basic and acidic residues) spans 217 to 262 (QIKDPEAKKPEDWDDKEYIPDPEDKKPEGYDDIPKEIPDPDAKKPE). The segment at 217–289 (QIKDPEAKKP…PEYKGPWKQK (73 aa)) is disordered. Residues 270 to 308 (GEWTAPTIPNPEYKGPWKQKKIKNPNYQGKWKAPMIDNP) form a 3 X approximate repeats region. E328 is a binding site for an alpha-D-glucoside. Positions 356-385 (ETWGKHKDAEKAAFDEAEKKKEEEEAAKAG) are enriched in basic and acidic residues. Residues 356–424 (ETWGKHKDAE…DSDDEKHDEL (69 aa)) are disordered. A compositionally biased stretch (acidic residues) spans 386 to 401 (EDDDDLDDEDAEDEDK). Over residues 402 to 424 (ADEKADSDAEDGKDSDDEKHDEL) the composition is skewed to basic and acidic residues. The Prevents secretion from ER motif lies at 421–424 (HDEL).

This sequence belongs to the calreticulin family. Phosphorylated.

It is found in the endoplasmic reticulum lumen. Molecular calcium-binding chaperone promoting folding, oligomeric assembly and quality control in the ER via the calreticulin/calnexin cycle. This lectin may interact transiently with almost all of the monoglucosylated glycoproteins that are synthesized in the ER. This chain is Calreticulin, found in Oryza sativa subsp. japonica (Rice).